Reading from the N-terminus, the 490-residue chain is 5'-3' exonuclease PLD3 (490 aa).

Residues Met1–Trp38 are Cytoplasmic-facing. The chain crosses the membrane as a helical; Signal-anchor for type II membrane protein span at residues Val39–Leu59. Residues Trp60–Leu490 are Lumenal-facing. Intrachain disulfides connect Cys77/Cys239 and Cys81/Cys237. 2 N-linked (GlcNAc...) asparagine glycosylation sites follow: Asn97 and Asn132. Residues Thr196–Ser223 form the PLD phosphodiesterase 1 domain. Residues His201, Lys203, and Asp208 contribute to the active site. His201 serves as the catalytic Proton donor. Phosphate-binding residues include His201 and Lys203. Position 218 (Asn218) interacts with phosphate. Residues Asn236, Asn284, and Asn387 are each glycosylated (N-linked (GlcNAc...) asparagine). A disulfide bridge connects residues Cys366 and Cys487. The region spanning Tyr411 to Tyr437 is the PLD phosphodiesterase 2 domain. His416 serves as a coordination point for phosphate. His416 acts as the Nucleophile in catalysis. Phe438 lines the Mg(2+) pocket.

The protein belongs to the phospholipase D family. As to quaternary structure, homodimer. Interacts with APP. In terms of processing, N-glycosylated. Proteolytically processed to a soluble form that is stable within endosomes and lysosomes. During transport through the secretory pathway becomes proteolysed by cysteine proteases, thereby releasing a stable soluble lysosomal lumenal polypeptide, whereas the transmembrane-bound fragment is rapidly degraded. Its transport route to lysosomes involves ubiquitination and the ESCRT complex. Post-translationally, ubiquitinated. Ubiquitination mediates sorting into lysosomes.

Its subcellular location is the endoplasmic reticulum membrane. The protein localises to the lysosome lumen. It localises to the early endosome membrane. It is found in the late endosome membrane. The protein resides in the golgi apparatus membrane. Its subcellular location is the endosome membrane. The catalysed reaction is Exonucleolytic cleavage in the 5'- to 3'-direction to yield nucleoside 3'-phosphates.. The enzyme catalyses a 5'-end 5'-dephospho-ribonucleotidyl-ribonucleotide-RNA + H2O = a ribonucleoside 3'-phosphate + a 5'-end dephospho-ribonucleoside-RNA + H(+). It carries out the reaction a ribonucleoside 3'-phosphate-2'-3'-cyclophospho-GMP + H2O = a ribonucleoside 3'-phosphate + 2',3'-cyclophospho-GMP + H(+). It catalyses the reaction a 5'-end 5'-dephospho-2'-deoxyribonucleotidyl-2'-deoxyribonucleotide in single-stranded DNA + H2O = a 5'-end dephospho-2'-deoxyribonucleoside in single-stranded DNA + a 2'-deoxyribonucleoside 3'-phosphate + H(+). The catalysed reaction is a 5'-end 5'-phospho-2'-deoxyribonucleotide in single-stranded DNA + H2O = a 5'-end 5'-dephospho-2'-deoxyribonucleotide in single-stranded DNA + phosphate. The enzyme catalyses a 3-lyso-sn-glycero-1-phospho-(3'-acyl-1'-sn-glycerol) + a 1-acyl-sn-glycerol = a 3-acyl-sn-glycero-1-phospho-(3'-acyl-1'-sn-glycerol) + glycerol. It carries out the reaction 3-lyso-sn-glycero-1-phospho-(3'-(9Z-octadecenoyl)-1'-sn-glycerol) + 1-(9Z-octadecenoyl)-sn-glycerol = 3-(9Z-octadecenoyl)-sn-glycero-1-phospho-(3'-(9Z-octadecenoyl)-1'-sn-glycerol) + glycerol. Functionally, 5'-&gt;3' exonuclease that hydrolyzes the phosphodiester bond of single-stranded DNA (ssDNA) and RNA molecules to form nucleoside 3'-monophosphates and 5'-end 5'-hydroxy deoxyribonucleotide/ribonucleotide fragments. Partially redundant with PLD4, can cleave all four nucleotides displaying higher efficiency for ssDNA and RNA fragments initiated with uridine and guanosine residues and lower efficiency for cytidine-initiated substrates. As a result, it does not always degrade polynucleotides to the single nucleotide level, it can stall at specific sites sparing certain fragments from exonucleolytic degradation. Processes self and pathogenic ssDNA and RNA molecules that reach the endolysosomal compartment via phagocytosis or autophagy and may serve as 'danger' signals for recognition by innate immune receptors such as toll-like receptors (TLRs). Degrades mitochondrial CpG-rich ssDNA fragments to prevent TLR9 activation and autoinflammatory response, but it can cleave viral RNA to generate ligands for TLR7 activation and initiate antiviral immune responses. In plasmacytoid dendritic cells, it cooperates with endonuclease RNASET2 to release 2',3'-cyclic guanosine monophosphate (2',3'-cGMP), a potent stimulatory ligand for TLR7. Produces 2',3'-cGMPs and cytidine-rich RNA fragments that occupy TLR7 ligand-binding pockets and trigger a signaling-competent state. Can exert polynucleotide phosphatase activity toward 5'-phosphorylated ssDNA substrates although at a slow rate. Transphosphatidylase that catalyzes the exchange with R to S stereo-inversion of the glycerol moiety between (S,R)-lysophosphatidylglycerol (LPG) and monoacylglycerol (MAG) substrates to yield (S,S)-bis(monoacylglycero)phosphate (BMP). Can synthesize a variety of (S,S)-BMPs representing the main phospholipid constituent of lysosomal intralumenal vesicle (ILV) membranes that bind acid hydrolases for lipid degradation. Regulates the homeostasis and interorganellar communication of the endolysosomal system with an overall impact on cellular removal of dysfunctional organelles via autophagy as well as proper protein and lipid turnover. May play a role in myotube formation in response to ER stress. The protein is 5'-3' exonuclease PLD3 (PLD3) of Macaca fascicularis (Crab-eating macaque).